We begin with the raw amino-acid sequence, 245 residues long: Protein-glutamine gamma-glutamyltransferase (245 aa).

Belongs to the bacillus TGase family.

The catalysed reaction is L-glutaminyl-[protein] + L-lysyl-[protein] = [protein]-L-lysyl-N(6)-5-L-glutamyl-[protein] + NH4(+). Functionally, probably plays a role in the assembly of the spore coat proteins by catalyzing epsilon-(gamma-glutamyl)lysine cross-links. In wild-type spores at 37 degrees Celsius, tgl mediates the cross-linking of GerQ in higher molecular mass forms, probably in cooperation with YabG. The sequence is that of Protein-glutamine gamma-glutamyltransferase (tgl) from Bacillus subtilis (strain 168).